The sequence spans 71 residues: Large ribosomal subunit protein bL31 (71 aa).

Residues Cys-16, Cys-18, Cys-37, and Cys-40 each coordinate Zn(2+).

The protein belongs to the bacterial ribosomal protein bL31 family. Type A subfamily. As to quaternary structure, part of the 50S ribosomal subunit. The cofactor is Zn(2+).

Its function is as follows. Binds the 23S rRNA. The sequence is that of Large ribosomal subunit protein bL31 from Pseudomonas entomophila (strain L48).